A 416-amino-acid polypeptide reads, in one-letter code: Glutamyl-tRNA reductase (416 aa).

Substrate contacts are provided by residues 46–49 (TCNR), serine 97, 102–104 (DHE), and glutamine 108. Cysteine 47 acts as the Nucleophile in catalysis. NADP(+) is bound at residue 178–183 (GAGMAA).

The protein belongs to the glutamyl-tRNA reductase family. Homodimer.

The enzyme catalyses (S)-4-amino-5-oxopentanoate + tRNA(Glu) + NADP(+) = L-glutamyl-tRNA(Glu) + NADPH + H(+). It participates in porphyrin-containing compound metabolism; protoporphyrin-IX biosynthesis; 5-aminolevulinate from L-glutamyl-tRNA(Glu): step 1/2. In terms of biological role, catalyzes the NADPH-dependent reduction of glutamyl-tRNA(Glu) to glutamate 1-semialdehyde (GSA). In Aeropyrum pernix (strain ATCC 700893 / DSM 11879 / JCM 9820 / NBRC 100138 / K1), this protein is Glutamyl-tRNA reductase.